Consider the following 86-residue polypeptide: MFKLCVFVALLSLAAAAPAPAPAPGLIAPGLVAPGIWGPTVVGSPLVAPQVVSVVPGAISHAAITQVHPSPLLIKSVHGLGPVVIG.

The first 16 residues, 1-16 (MFKLCVFVALLSLAAA), serve as a signal peptide directing secretion. 2 consecutive propeptides follow at residues 17 to 50 (APAP…VAPQ) and 63 to 75 (AITQ…LLIK). The residue at position 85 (Ile85) is an Isoleucine amide.

Its subcellular location is the secreted. This chain is Neuropeptide-like 3 (Nplp3), found in Drosophila yakuba (Fruit fly).